We begin with the raw amino-acid sequence, 109 residues long: Oncomodulin-2 (109 aa).

2 consecutive EF-hand domains span residues 39–74 and 78–109; these read MSAS…FESG and LTES…MVHS. Ca(2+) contacts are provided by Asp-52, Asp-54, Ser-56, Tyr-58, Glu-63, Asp-91, Asp-93, Asp-95, Lys-97, and Glu-102.

The protein belongs to the parvalbumin family.

In Homo sapiens (Human), this protein is Oncomodulin-2 (OCM2).